A 358-amino-acid chain; its full sequence is Alanine racemase (358 aa).

Lys-34 acts as the Proton acceptor; specific for D-alanine in catalysis. Position 34 is an N6-(pyridoxal phosphate)lysine (Lys-34). Arg-129 is a binding site for substrate. Catalysis depends on Tyr-254, which acts as the Proton acceptor; specific for L-alanine. Met-302 contacts substrate.

The protein belongs to the alanine racemase family. The cofactor is pyridoxal 5'-phosphate.

The enzyme catalyses L-alanine = D-alanine. It participates in amino-acid biosynthesis; D-alanine biosynthesis; D-alanine from L-alanine: step 1/1. Functionally, catalyzes the interconversion of L-alanine and D-alanine. May also act on other amino acids. The chain is Alanine racemase (alr) from Hamiltonella defensa subsp. Acyrthosiphon pisum (strain 5AT).